A 112-amino-acid chain; its full sequence is Nucleoid-associated protein RER_03900 (112 aa).

It belongs to the YbaB/EbfC family. Homodimer.

The protein localises to the cytoplasm. The protein resides in the nucleoid. Functionally, binds to DNA and alters its conformation. May be involved in regulation of gene expression, nucleoid organization and DNA protection. In Rhodococcus erythropolis (strain PR4 / NBRC 100887), this protein is Nucleoid-associated protein RER_03900.